We begin with the raw amino-acid sequence, 457 residues long: Embryogenesis-associated protein EMB8 (457 aa).

Residues 39–59 are disordered; it reads KKPAAGACEEQDELTSGSAAR. An AB hydrolase-1 domain is found at 151 to 391; sequence PVLILLPGLT…LVVTPNGGHL (241 aa). Active-site charge relay system residues include Ser-231, Asp-361, and His-390. Over residues 438–447 the composition is skewed to basic and acidic residues; it reads VDSVHTRETN. Residues 438-457 form a disordered region; it reads VDSVHTRETNNYKSPIENVN. The segment covering 448–457 has biased composition (polar residues); it reads NYKSPIENVN.

Belongs to the AB hydrolase superfamily. AB hydrolase 4 family.

The chain is Embryogenesis-associated protein EMB8 (EMB8) from Picea glauca (White spruce).